Consider the following 96-residue polypeptide: MNSRMRRWAATSRLLHEDPPATPPSQDQQAEVLRRDIHILNAKISELENQMERLCRSLESTFNRIELLHSMLAQGEEEEEEEDGAEDIEENGEESD.

2 disordered regions span residues 1–29 (MNSR…QDQQ) and 72–96 (LAQG…EESD). Residues 75–96 (GEEEEEEEDGAEDIEENGEESD) are compositionally biased toward acidic residues.

The sequence is that of Early E1A 11 kDa protein from Murine adenovirus A serotype 1 (MAdV-1).